We begin with the raw amino-acid sequence, 290 residues long: MTIYTLSHGSLKLDVSDQGGVIEGFWRDTTPLLRPGKKSGVATDASCFPLVPFANRVSGNRFVWQGREYQLQPNVEWDAHYLHGDGWLGEWQCVSHSDDSLCLVYEHRSGVYHYRVSQAFHLTADTLTVTLSVTNQGAETLPFGTGWHPYFPLSPQTRIQAQASGYWLEREQWLAGEFCEQLPQELDFNQPAPLPRQWVNNGFAGWNGQARIEQPQEGYAIIMETTPPAPCYFIFVSDPAFDKGYAFDFFCLEPMSHAPDDHHRPEGGDLIALAPGESTTSEMSLRVEWL.

This is an uncharacterized protein from Escherichia coli (strain K12).